Consider the following 891-residue polypeptide: uncharacterized protein (891 aa).

This is an uncharacterized protein from Ictalurid herpesvirus 1 (strain Auburn) (IcHV-1).